A 332-amino-acid polypeptide reads, in one-letter code: Large ribosomal subunit protein mL44 (332 aa).

A mitochondrion-targeting transit peptide spans 1–30 (MASGLVRLLQQGPRCLLAPVAPKLVPPVRG). An RNase III domain is found at 86-228 (DLLKTAFVNS…LITQMTGKEL (143 aa)). The DRBM domain maps to 236–306 (NPMGLLVEEL…ARVALRKLYG (71 aa)).

The protein belongs to the ribonuclease III family. Mitochondrion-specific ribosomal protein mL44 subfamily. Component of the mitochondrial ribosome large subunit (39S) which comprises a 16S rRNA and about 50 distinct proteins.

It localises to the mitochondrion. Its function is as follows. Component of the 39S subunit of mitochondrial ribosome. May have a function in the assembly/stability of nascent mitochondrial polypeptides exiting the ribosome. The polypeptide is Large ribosomal subunit protein mL44 (MRPL44) (Pongo abelii (Sumatran orangutan)).